The following is a 704-amino-acid chain: Protein kinase C-like 1 (704 aa).

Phosphothreonine; by autocatalysis occurs at positions 89 and 139. 2 consecutive Phorbol-ester/DAG-type zinc fingers follow at residues 165–215 (GHQF…IMQC) and 237–287 (PHRF…SNLC). Thr-324 bears the Phosphothreonine; by autocatalysis mark. The 260-residue stretch at 375–634 (FNLLKVLGKG…DGPIRQHCFF (260 aa)) folds into the Protein kinase domain. Residues 381 to 389 (LGKGSFGKV) and Lys-404 each bind ATP. Catalysis depends on Asp-499, which acts as the Proton acceptor. Residues 635–704 (RGVDWKRFEN…FSYTNPHFSK (70 aa)) enclose the AGC-kinase C-terminal domain.

The protein belongs to the protein kinase superfamily. AGC Ser/Thr protein kinase family. PKC subfamily.

The enzyme catalyses L-seryl-[protein] + ATP = O-phospho-L-seryl-[protein] + ADP + H(+). The catalysed reaction is L-threonyl-[protein] + ATP = O-phospho-L-threonyl-[protein] + ADP + H(+). Its function is as follows. Diacylglycerol (DAG)-dependent serine/threonine-protein kinase that phosphorylates a range of cellular proteins. Phosphorylates mlk-1, a component of the JNK pathway. Involved in axon regeneration after injury probably by activating the JNK pathway. Plays a role in resistance to fungal infection and in wound healing by promoting expression of antimicrobial peptide nlp-29 in the epidermis downstream of gpa-12 and plc-3 and upstream of tir-1-p38-like pathway. Probably by regulating neuronal transmission in ALA neurons, regulates the decrease in pharyngeal pumping during the quiescent state that precedes each larval molt, downstream of lin-3 and receptor let-23 and phospholipase plc-3. This chain is Protein kinase C-like 1 (tpa-1), found in Caenorhabditis elegans.